Reading from the N-terminus, the 415-residue chain is Acetylornithine aminotransferase (415 aa).

Residues 115 to 116 (GA) and phenylalanine 148 each bind pyridoxal 5'-phosphate. Arginine 151 contacts N(2)-acetyl-L-ornithine. Position 239 to 242 (239 to 242 (DEVQ)) interacts with pyridoxal 5'-phosphate. Lysine 268 is subject to N6-(pyridoxal phosphate)lysine. Serine 295 contacts N(2)-acetyl-L-ornithine. Threonine 296 is a pyridoxal 5'-phosphate binding site.

It belongs to the class-III pyridoxal-phosphate-dependent aminotransferase family. ArgD subfamily. In terms of assembly, homodimer. It depends on pyridoxal 5'-phosphate as a cofactor.

It is found in the cytoplasm. The catalysed reaction is N(2)-acetyl-L-ornithine + 2-oxoglutarate = N-acetyl-L-glutamate 5-semialdehyde + L-glutamate. Its pathway is amino-acid biosynthesis; L-arginine biosynthesis; N(2)-acetyl-L-ornithine from L-glutamate: step 4/4. This Prochlorococcus marinus subsp. pastoris (strain CCMP1986 / NIES-2087 / MED4) protein is Acetylornithine aminotransferase.